Here is a 138-residue protein sequence, read N- to C-terminus: Cell division protein SepF (138 aa).

Positions 1–59 (MNNKFKDFFGFGDNDSYEERDAYEEHYDEQEEMQNSNRPTNSRDSNVVSIKAGQAGSGP) are disordered. A compositionally biased stretch (polar residues) spans 33–48 (MQNSNRPTNSRDSNVV).

The protein belongs to the SepF family. In terms of assembly, homodimer. Interacts with FtsZ.

It is found in the cytoplasm. Functionally, cell division protein that is part of the divisome complex and is recruited early to the Z-ring. Probably stimulates Z-ring formation, perhaps through the cross-linking of FtsZ protofilaments. Its function overlaps with FtsA. The protein is Cell division protein SepF of Lactobacillus delbrueckii subsp. bulgaricus (strain ATCC 11842 / DSM 20081 / BCRC 10696 / JCM 1002 / NBRC 13953 / NCIMB 11778 / NCTC 12712 / WDCM 00102 / Lb 14).